Reading from the N-terminus, the 117-residue chain is Basic phospholipase A2 pseudexin B chain (117 aa).

Disulfide bonds link cysteine 11–cysteine 71, cysteine 27–cysteine 117, cysteine 29–cysteine 45, cysteine 44–cysteine 98, cysteine 51–cysteine 91, cysteine 60–cysteine 84, and cysteine 78–cysteine 89. Ca(2+) is bound by residues tyrosine 28, glycine 30, and glycine 32. Residue histidine 48 is part of the active site. Aspartate 49 serves as a coordination point for Ca(2+). The active site involves aspartate 92.

It belongs to the phospholipase A2 family. Group I subfamily. D49 sub-subfamily. Ca(2+) serves as cofactor. As to expression, expressed by the venom gland.

It localises to the secreted. It catalyses the reaction a 1,2-diacyl-sn-glycero-3-phosphocholine + H2O = a 1-acyl-sn-glycero-3-phosphocholine + a fatty acid + H(+). Functionally, PLA2 catalyzes the calcium-dependent hydrolysis of the 2-acyl groups in 3-sn-phosphoglycerides. This chain is Basic phospholipase A2 pseudexin B chain, found in Pseudechis porphyriacus (Red-bellied black snake).